We begin with the raw amino-acid sequence, 621 residues long: Chaperone protein HscA homolog (621 aa).

The protein belongs to the heat shock protein 70 family.

Chaperone involved in the maturation of iron-sulfur cluster-containing proteins. Has a low intrinsic ATPase activity which is markedly stimulated by HscB. The sequence is that of Chaperone protein HscA homolog from Polynucleobacter asymbioticus (strain DSM 18221 / CIP 109841 / QLW-P1DMWA-1) (Polynucleobacter necessarius subsp. asymbioticus).